The primary structure comprises 151 residues: 3-hydroxyacyl-[acyl-carrier-protein] dehydratase FabZ (151 aa).

Residue H54 is part of the active site.

It belongs to the thioester dehydratase family. FabZ subfamily.

Its subcellular location is the cytoplasm. It catalyses the reaction a (3R)-hydroxyacyl-[ACP] = a (2E)-enoyl-[ACP] + H2O. Involved in unsaturated fatty acids biosynthesis. Catalyzes the dehydration of short chain beta-hydroxyacyl-ACPs and long chain saturated and unsaturated beta-hydroxyacyl-ACPs. The protein is 3-hydroxyacyl-[acyl-carrier-protein] dehydratase FabZ of Pectobacterium atrosepticum (strain SCRI 1043 / ATCC BAA-672) (Erwinia carotovora subsp. atroseptica).